Reading from the N-terminus, the 239-residue chain is Probable transcriptional regulatory protein MG332 (239 aa).

This sequence belongs to the TACO1 family.

The protein resides in the cytoplasm. This is Probable transcriptional regulatory protein MG332 from Mycoplasma genitalium (strain ATCC 33530 / DSM 19775 / NCTC 10195 / G37) (Mycoplasmoides genitalium).